The chain runs to 172 residues: Signal peptidase complex catalytic subunit sec11 (172 aa).

Residues 1-14 are Cytoplasmic-facing; the sequence is MLSFLQNPRQAAAQ. Residues 15-35 traverse the membrane as a helical; Signal-anchor for type II membrane protein segment; sequence VLNFALILSTAFMMWKGLSVA. Residues 36 to 172 lie on the Lumenal side of the membrane; sequence SDSPSPIVVV…MGLVVVLQRE (137 aa). Residues Ser-49, His-90, and Asp-115 each act as charge relay system in the active site. The C-terminal short (CTS) helix stretch occupies residues 158 to 169; the sequence is VMLGMMGLVVVL.

This sequence belongs to the peptidase S26B family. As to quaternary structure, component of the signal peptidase complex (SPC) composed of a catalytic subunit SEC11 and three accessory subunits SPC1, SPC2 and SPC3. The complex induces a local thinning of the ER membrane which is used to measure the length of the signal peptide (SP) h-region of protein substrates. This ensures the selectivity of the complex towards h-regions shorter than 18-20 amino acids. SPC associates with the translocon complex.

It localises to the endoplasmic reticulum membrane. The enzyme catalyses Cleavage of hydrophobic, N-terminal signal or leader sequences from secreted and periplasmic proteins.. Its function is as follows. Catalytic component of the signal peptidase complex (SPC) which catalyzes the cleavage of N-terminal signal sequences from nascent proteins as they are translocated into the lumen of the endoplasmic reticulum. Specifically cleaves N-terminal signal peptides that contain a hydrophobic alpha-helix (h-region) shorter than 18-20 amino acids. This chain is Signal peptidase complex catalytic subunit sec11 (sec11), found in Sclerotinia sclerotiorum (strain ATCC 18683 / 1980 / Ss-1) (White mold).